Consider the following 89-residue polypeptide: Extender of the chronological lifespan protein ecl3 (89 aa).

It belongs to the ecl1 family.

It is found in the nucleus. Involved in chronological cell aging. The chain is Extender of the chronological lifespan protein ecl3 (ecl3) from Schizosaccharomyces pombe (strain 972 / ATCC 24843) (Fission yeast).